We begin with the raw amino-acid sequence, 566 residues long: Chaperonin GroEL 1 (566 aa).

Residues 29 to 32, 86 to 90, glycine 413, and aspartate 492 each bind ATP; these read TIGP and DGTTT. The disordered stretch occupies residues 520 to 540; that stretch reads DKPEPPAPAGDGGGDPMGGMG. Positions 529-540 are enriched in gly residues; sequence GDGGGDPMGGMG.

Belongs to the chaperonin (HSP60) family. In terms of assembly, forms a cylinder of 14 subunits composed of two heptameric rings stacked back-to-back. Interacts with the co-chaperonin GroES.

The protein resides in the cytoplasm. It catalyses the reaction ATP + H2O + a folded polypeptide = ADP + phosphate + an unfolded polypeptide.. Together with its co-chaperonin GroES, plays an essential role in assisting protein folding. The GroEL-GroES system forms a nano-cage that allows encapsulation of the non-native substrate proteins and provides a physical environment optimized to promote and accelerate protein folding. This is Chaperonin GroEL 1 from Prochlorococcus marinus (strain MIT 9313).